A 428-amino-acid polypeptide reads, in one-letter code: Glutamate-1-semialdehyde 2,1-aminomutase (428 aa).

An N6-(pyridoxal phosphate)lysine modification is found at Lys-267.

This sequence belongs to the class-III pyridoxal-phosphate-dependent aminotransferase family. HemL subfamily. Homodimer. Requires pyridoxal 5'-phosphate as cofactor.

The protein localises to the cytoplasm. The enzyme catalyses (S)-4-amino-5-oxopentanoate = 5-aminolevulinate. It functions in the pathway porphyrin-containing compound metabolism; protoporphyrin-IX biosynthesis; 5-aminolevulinate from L-glutamyl-tRNA(Glu): step 2/2. Its pathway is porphyrin-containing compound metabolism; chlorophyll biosynthesis. The protein is Glutamate-1-semialdehyde 2,1-aminomutase of Prochlorococcus marinus (strain MIT 9303).